Reading from the N-terminus, the 600-residue chain is Elongation factor 4 (600 aa).

The tr-type G domain maps to 5-187; that stretch reads KYIRNFSIIA…AIINKLPAPK (183 aa). GTP-binding positions include 17–22 and 134–137; these read DHGKST and NKID.

The protein belongs to the TRAFAC class translation factor GTPase superfamily. Classic translation factor GTPase family. LepA subfamily.

The protein resides in the cell inner membrane. The enzyme catalyses GTP + H2O = GDP + phosphate + H(+). Its function is as follows. Required for accurate and efficient protein synthesis under certain stress conditions. May act as a fidelity factor of the translation reaction, by catalyzing a one-codon backward translocation of tRNAs on improperly translocated ribosomes. Back-translocation proceeds from a post-translocation (POST) complex to a pre-translocation (PRE) complex, thus giving elongation factor G a second chance to translocate the tRNAs correctly. Binds to ribosomes in a GTP-dependent manner. This chain is Elongation factor 4, found in Rickettsia prowazekii (strain Madrid E).